Consider the following 101-residue polypeptide: Small ribosomal subunit protein uS14 (101 aa).

Belongs to the universal ribosomal protein uS14 family. In terms of assembly, part of the 30S ribosomal subunit. Contacts proteins S3 and S10.

Functionally, binds 16S rRNA, required for the assembly of 30S particles and may also be responsible for determining the conformation of the 16S rRNA at the A site. This chain is Small ribosomal subunit protein uS14, found in Nitrosomonas europaea (strain ATCC 19718 / CIP 103999 / KCTC 2705 / NBRC 14298).